Reading from the N-terminus, the 316-residue chain is HTH-type transcriptional regulator cbl (316 aa).

The 59-residue stretch at 1-59 (MNFQQLKIIREAARQDYNLTEVANMLFTSQSGVSRHIRELEDELGIEIFVRRGKRLLGM) folds into the HTH lysR-type domain. The H-T-H motif DNA-binding region spans 19 to 38 (LTEVANMLFTSQSGVSRHIR).

This sequence belongs to the LysR transcriptional regulatory family.

In terms of biological role, may be an accessory regulatory protein within the cys regulon. The polypeptide is HTH-type transcriptional regulator cbl (cbl) (Escherichia coli (strain K12)).